Consider the following 158-residue polypeptide: Transcription elongation factor GreA (158 aa).

Positions 8–74 (TKGGYNKLKD…TLERVLSTAT (67 aa)) form a coiled coil.

The protein belongs to the GreA/GreB family.

Necessary for efficient RNA polymerase transcription elongation past template-encoded arresting sites. The arresting sites in DNA have the property of trapping a certain fraction of elongating RNA polymerases that pass through, resulting in locked ternary complexes. Cleavage of the nascent transcript by cleavage factors such as GreA or GreB allows the resumption of elongation from the new 3'terminus. GreA releases sequences of 2 to 3 nucleotides. In Chloroherpeton thalassium (strain ATCC 35110 / GB-78), this protein is Transcription elongation factor GreA.